A 411-amino-acid polypeptide reads, in one-letter code: Putative ion-transport protein YfeO (411 aa).

Helical transmembrane passes span 9–29, 54–74, 99–119, 149–169, 186–206, 223–243, 258–278, 296–316, 322–342, 343–363, and 386–406; these read MLLL…VLIA, DSPF…GLII, ALPG…SLGP, ILAS…AALI, LFAP…FFHP, IASG…AVWC, VLIL…GGPL, LGAG…VIAA, GGRI…LHAH, VEAV…VLVV, and LLCI…LLAA.

It belongs to the chloride channel (TC 2.A.49) family.

The protein resides in the cell membrane. The chain is Putative ion-transport protein YfeO from Salmonella schwarzengrund (strain CVM19633).